We begin with the raw amino-acid sequence, 130 residues long: Small ribosomal subunit protein uS9 (130 aa).

The disordered stretch occupies residues 109–130 (RAKERKKYGLYGARRSPQFTKR).

The protein belongs to the universal ribosomal protein uS9 family.

The protein is Small ribosomal subunit protein uS9 of Malacoplasma penetrans (strain HF-2) (Mycoplasma penetrans).